Reading from the N-terminus, the 101-residue chain is NADH-quinone oxidoreductase subunit K (101 aa).

3 helical membrane-spanning segments follow: residues Leu4–Leu24, Ile30–Phe50, and Ile61–Leu81.

Belongs to the complex I subunit 4L family. As to quaternary structure, NDH-1 is composed of 14 different subunits. Subunits NuoA, H, J, K, L, M, N constitute the membrane sector of the complex.

The protein localises to the cell inner membrane. It catalyses the reaction a quinone + NADH + 5 H(+)(in) = a quinol + NAD(+) + 4 H(+)(out). In terms of biological role, NDH-1 shuttles electrons from NADH, via FMN and iron-sulfur (Fe-S) centers, to quinones in the respiratory chain. The immediate electron acceptor for the enzyme in this species is believed to be ubiquinone. Couples the redox reaction to proton translocation (for every two electrons transferred, four hydrogen ions are translocated across the cytoplasmic membrane), and thus conserves the redox energy in a proton gradient. This Laribacter hongkongensis (strain HLHK9) protein is NADH-quinone oxidoreductase subunit K.